Here is a 277-residue protein sequence, read N- to C-terminus: Phosphatidylglycerol--prolipoprotein diacylglyceryl transferase (277 aa).

4 helical membrane passes run 18–38 (ISVKWYGVIIASAVVIALLLA), 51–71 (IIVDLLIWAIPISIISARIYY), 89–109 (IWHGGIAIYGALIGAVLTAII), and 116–136 (ISFWQLADVVAPSLIIAQAIG). Residue Arg137 coordinates a 1,2-diacyl-sn-glycero-3-phospho-(1'-sn-glycerol). The next 3 membrane-spanning stretches (helical) occupy residues 177 to 197 (QPTFLYESLWNVLGFIVLLII), 205 to 225 (GELFLGYVIWYSFGRFFIEGM), and 235 to 255 (FRVSQVLSLLLIVLSIGIIIY).

The protein belongs to the Lgt family.

The protein localises to the cell membrane. It carries out the reaction L-cysteinyl-[prolipoprotein] + a 1,2-diacyl-sn-glycero-3-phospho-(1'-sn-glycerol) = an S-1,2-diacyl-sn-glyceryl-L-cysteinyl-[prolipoprotein] + sn-glycerol 1-phosphate + H(+). Its pathway is protein modification; lipoprotein biosynthesis (diacylglyceryl transfer). Catalyzes the transfer of the diacylglyceryl group from phosphatidylglycerol to the sulfhydryl group of the N-terminal cysteine of a prolipoprotein, the first step in the formation of mature lipoproteins. The sequence is that of Phosphatidylglycerol--prolipoprotein diacylglyceryl transferase from Listeria monocytogenes serotype 4b (strain CLIP80459).